Here is a 405-residue protein sequence, read N- to C-terminus: MQYTEIMIRYGELSTKGKNRKDFINRLASNVQKVLHDFPDLKIQTHHDRMHILLNGTPFEPVNDRLKVVFGIQTYSPVIKTEKSLEAIEKTALELMQATYKAGMTFKVNTRRSDHKFIYDTNQLNQMVADYLYNHMEGLQAEMKHPDMVLLLEIRQDGAYISNQLLHGAGGMPVGTAGKAVMMLSGGIDSPVASYLAMKRGVNIEMVHFFSPPYTSEKALAKAKELTSILAKYSGRINFIEVPFAEIQETIKEKLPEGYLMTVQRRFMLRLADIIREKRHALAIFNGESVGQVASQTLESMSAINDVTTTPVLRPVATMDKTEIIAKAEEIGTFDLSIQPFEDCCTIFAPPRPKTKPKIDKAREYESRLDVDGLIERALAGVKVTPIYPGQSFLDDLDEEDADLL.

Residues 60–165 (EPVNDRLKVV…QDGAYISNQL (106 aa)) enclose the THUMP domain. ATP is bound by residues 183–184 (ML), 208–209 (HF), Arg265, Gly287, and Gln296.

It belongs to the ThiI family.

The protein resides in the cytoplasm. The enzyme catalyses [ThiI sulfur-carrier protein]-S-sulfanyl-L-cysteine + a uridine in tRNA + 2 reduced [2Fe-2S]-[ferredoxin] + ATP + H(+) = [ThiI sulfur-carrier protein]-L-cysteine + a 4-thiouridine in tRNA + 2 oxidized [2Fe-2S]-[ferredoxin] + AMP + diphosphate. The catalysed reaction is [ThiS sulfur-carrier protein]-C-terminal Gly-Gly-AMP + S-sulfanyl-L-cysteinyl-[cysteine desulfurase] + AH2 = [ThiS sulfur-carrier protein]-C-terminal-Gly-aminoethanethioate + L-cysteinyl-[cysteine desulfurase] + A + AMP + 2 H(+). It functions in the pathway cofactor biosynthesis; thiamine diphosphate biosynthesis. In terms of biological role, catalyzes the ATP-dependent transfer of a sulfur to tRNA to produce 4-thiouridine in position 8 of tRNAs, which functions as a near-UV photosensor. Also catalyzes the transfer of sulfur to the sulfur carrier protein ThiS, forming ThiS-thiocarboxylate. This is a step in the synthesis of thiazole, in the thiamine biosynthesis pathway. The sulfur is donated as persulfide by IscS. In Lactobacillus delbrueckii subsp. bulgaricus (strain ATCC BAA-365 / Lb-18), this protein is Probable tRNA sulfurtransferase.